Consider the following 390-residue polypeptide: Chorismate synthase (390 aa).

NADP(+)-binding residues include Arg-40 and Arg-46. FMN-binding positions include Arg-128–Ser-130, Gln-251–Ala-252, Gly-296, Lys-311–Thr-315, and Arg-339.

This sequence belongs to the chorismate synthase family. Homotetramer. FMNH2 serves as cofactor.

The catalysed reaction is 5-O-(1-carboxyvinyl)-3-phosphoshikimate = chorismate + phosphate. Its pathway is metabolic intermediate biosynthesis; chorismate biosynthesis; chorismate from D-erythrose 4-phosphate and phosphoenolpyruvate: step 7/7. Its function is as follows. Catalyzes the anti-1,4-elimination of the C-3 phosphate and the C-6 proR hydrogen from 5-enolpyruvylshikimate-3-phosphate (EPSP) to yield chorismate, which is the branch point compound that serves as the starting substrate for the three terminal pathways of aromatic amino acid biosynthesis. This reaction introduces a second double bond into the aromatic ring system. The chain is Chorismate synthase from Sulfurihydrogenibium sp. (strain YO3AOP1).